A 151-amino-acid polypeptide reads, in one-letter code: Ribosome maturation factor RimP (151 aa).

The protein belongs to the RimP family.

It localises to the cytoplasm. In terms of biological role, required for maturation of 30S ribosomal subunits. This Persephonella marina (strain DSM 14350 / EX-H1) protein is Ribosome maturation factor RimP.